A 186-amino-acid polypeptide reads, in one-letter code: MAVARAGVLGVQWLQRASRNVMPLGARTASHMTKDMFPGPYPRTPEERAAAAKKYNMRVEDYEPYPDDGMGYGDYPKLPDRSQHERDPWYSWDQPGLRLNWGEPMHWHLDMYNRNRVDTSPTPLSWHVMCMQLFGFLAFMIFMCWVGDVYPVYQPVGPKQYPYNNLYLERGGDPSKEPERVVHYEI.

The N-terminal 28 residues, 1–28 (MAVARAGVLGVQWLQRASRNVMPLGART), are a transit peptide targeting the mitochondrion. The chain crosses the membrane as a helical span at residues 133-153 (LFGFLAFMIFMCWVGDVYPVY).

It belongs to the complex I NDUFB8 subunit family. Complex I is composed of 45 different subunits.

Its subcellular location is the mitochondrion inner membrane. Accessory subunit of the mitochondrial membrane respiratory chain NADH dehydrogenase (Complex I), that is believed not to be involved in catalysis. Complex I functions in the transfer of electrons from NADH to the respiratory chain. The immediate electron acceptor for the enzyme is believed to be ubiquinone. The protein is NADH dehydrogenase [ubiquinone] 1 beta subcomplex subunit 8, mitochondrial (NDUFB8) of Pan troglodytes (Chimpanzee).